The chain runs to 191 residues: MKHHSLIFLTGFSGSGKSTIGPLLANSLGFEFIDLDREIELTAGKSINRIFAEDGEAAFRSLELRTLEKIGQQERMVVSLGGGVLENDRCFELIRSHGTLIYLKSSPEILTLRLQHKTDRPLLKGPDGRKLTREEIQQRIAELLKKREPRYLKADLVLFTDSKKIGASVEELTRKIERHIRRASKNNTNEK.

14–19 (GSGKST) is a binding site for ATP. Serine 18 contributes to the Mg(2+) binding site. Substrate contacts are provided by aspartate 36, arginine 60, and glycine 82. Arginine 120 is an ATP binding site. Residue arginine 147 coordinates substrate.

The protein belongs to the shikimate kinase family. As to quaternary structure, monomer. It depends on Mg(2+) as a cofactor.

The protein localises to the cytoplasm. It carries out the reaction shikimate + ATP = 3-phosphoshikimate + ADP + H(+). It participates in metabolic intermediate biosynthesis; chorismate biosynthesis; chorismate from D-erythrose 4-phosphate and phosphoenolpyruvate: step 5/7. In terms of biological role, catalyzes the specific phosphorylation of the 3-hydroxyl group of shikimic acid using ATP as a cosubstrate. The chain is Shikimate kinase from Chlorobaculum tepidum (strain ATCC 49652 / DSM 12025 / NBRC 103806 / TLS) (Chlorobium tepidum).